Reading from the N-terminus, the 89-residue chain is MSIFNYLRRRASTASVAKERLQIIISHERSQRNTPDYLPKLQEEILAVIAKYVNISRDQVSVNLERMEDSAVLELNITMPDKALEDSNS.

Belongs to the MinE family.

Its function is as follows. Prevents the cell division inhibition by proteins MinC and MinD at internal division sites while permitting inhibition at polar sites. This ensures cell division at the proper site by restricting the formation of a division septum at the midpoint of the long axis of the cell. This chain is Cell division topological specificity factor, found in Legionella pneumophila (strain Paris).